The following is a 271-amino-acid chain: MAPRSFWKGYLKLSLVTCPVVMAPAKSEKEKLRFHTLNRATGNRVQSRYIDSVSGKPVDSADQVKGFPRDDQSYVMLEDEELDSVALESARTIDIELFAPADSIDWIWYDAPHYLTPGDEVGEEAFAVIREAMKATKMVGISRLVLYRRERAVLLEPRGKGIILWTLRYGDEVRDPKLYFDAIKDQKPVPELLSLVNRLIEERVKPWSPEMASDPVQDRLRDIIEAKKTPPAKKTKAEEKTGKGSAESNVIDIMDALRKSLGPAAKKPKGR.

The Ku domain maps to 12 to 194 (KLSLVTCPVV…DQKPVPELLS (183 aa)). Positions 225-249 (EAKKTPPAKKTKAEEKTGKGSAESN) are disordered.

The protein belongs to the prokaryotic Ku family. Homodimer. Interacts with LigD.

Its function is as follows. With LigD forms a non-homologous end joining (NHEJ) DNA repair enzyme, which repairs dsDNA breaks with reduced fidelity. Binds linear dsDNA with 5'- and 3'- overhangs but not closed circular dsDNA nor ssDNA. Recruits and stimulates the ligase activity of LigD. The protein is Non-homologous end joining protein Ku of Methylocella silvestris (strain DSM 15510 / CIP 108128 / LMG 27833 / NCIMB 13906 / BL2).